Here is a 573-residue protein sequence, read N- to C-terminus: Arginine--tRNA ligase (573 aa).

Residues 122–132 carry the 'HIGH' region motif; sequence PNLAKEMHVGH.

This sequence belongs to the class-I aminoacyl-tRNA synthetase family. Monomer.

It localises to the cytoplasm. It catalyses the reaction tRNA(Arg) + L-arginine + ATP = L-arginyl-tRNA(Arg) + AMP + diphosphate. This chain is Arginine--tRNA ligase, found in Laribacter hongkongensis (strain HLHK9).